The primary structure comprises 65 residues: Large ribosomal subunit protein bL35 (65 aa).

Residues 1-65 (MPKMKTNRAA…GRLDRMLPYL (65 aa)) form a disordered region. Over residues 10-44 (AAKRFRKTASGKYKAGHANRSHILTKKATKRKRNL) the composition is skewed to basic residues. Positions 50–65 (VRAEDAGRLDRMLPYL) are enriched in basic and acidic residues.

It belongs to the bacterial ribosomal protein bL35 family.

The polypeptide is Large ribosomal subunit protein bL35 (Xylella fastidiosa (strain M12)).